Reading from the N-terminus, the 278-residue chain is Putative carbamate hydrolase RutD (278 aa).

It belongs to the AB hydrolase superfamily. Hydrolase RutD family.

It catalyses the reaction carbamate + 2 H(+) = NH4(+) + CO2. Its function is as follows. Involved in pyrimidine catabolism. May facilitate the hydrolysis of carbamate, a reaction that can also occur spontaneously. This Yersinia enterocolitica serotype O:8 / biotype 1B (strain NCTC 13174 / 8081) protein is Putative carbamate hydrolase RutD.